A 313-amino-acid polypeptide reads, in one-letter code: Porphobilinogen deaminase (313 aa).

Position 243 is an S-(dipyrrolylmethanemethyl)cysteine (C243).

This sequence belongs to the HMBS family. Monomer. Requires dipyrromethane as cofactor.

The catalysed reaction is 4 porphobilinogen + H2O = hydroxymethylbilane + 4 NH4(+). Its pathway is porphyrin-containing compound metabolism; protoporphyrin-IX biosynthesis; coproporphyrinogen-III from 5-aminolevulinate: step 2/4. Tetrapolymerization of the monopyrrole PBG into the hydroxymethylbilane pre-uroporphyrinogen in several discrete steps. This chain is Porphobilinogen deaminase, found in Bordetella petrii (strain ATCC BAA-461 / DSM 12804 / CCUG 43448).